The following is a 509-amino-acid chain: ATP synthase subunit alpha (509 aa).

ATP is bound at residue 169–176; it reads GDRQTGKT.

Belongs to the ATPase alpha/beta chains family. F-type ATPases have 2 components, CF(1) - the catalytic core - and CF(0) - the membrane proton channel. CF(1) has five subunits: alpha(3), beta(3), gamma(1), delta(1), epsilon(1). CF(0) has three main subunits: a(1), b(2) and c(9-12). The alpha and beta chains form an alternating ring which encloses part of the gamma chain. CF(1) is attached to CF(0) by a central stalk formed by the gamma and epsilon chains, while a peripheral stalk is formed by the delta and b chains.

Its subcellular location is the cell inner membrane. It carries out the reaction ATP + H2O + 4 H(+)(in) = ADP + phosphate + 5 H(+)(out). Its function is as follows. Produces ATP from ADP in the presence of a proton gradient across the membrane. The alpha chain is a regulatory subunit. This chain is ATP synthase subunit alpha, found in Xanthobacter autotrophicus (strain ATCC BAA-1158 / Py2).